Here is a 419-residue protein sequence, read N- to C-terminus: MTTQLEQAWELAKQRFAAVGIDVEEALRQLDRLPVSMHCWQGDDVSGFENPEGSLTGGIQATGNYPGKARNASELRTDLEQAMRLIPGPKRLNLHAIYLESDTPVSRDQIKPEHFKNWVEWAKANQLGLDFNPSCFSHPLSADGFTLSHADDSIRQFWIDHCKASRRVSAYFGEQLGTPSVMNIWIPDGMKDITVDRLAPRQRLLAALDEVISEKLNPAHHIDAVESKLFGIGAESYTVGSNEFYMGYATSRQTALCLDAGHFHPTEVISDKISAAMLYVPQLLLHVSRPVRWDSDHVVLLDDETQAIASEIVRHDLFDRVHIGLDFFDASINRIAAWVIGTRNMKKALLRALLEPTAELRKLEAAGDYTARLALLEEQKSLSWQAVWEMYCQRHDTPTGSEWLESVRAYEKAILSQRG.

Histidine 262, aspartate 294, and aspartate 296 together coordinate Mn(2+).

It belongs to the rhamnose isomerase family. In terms of assembly, homotetramer. Mn(2+) is required as a cofactor.

Its subcellular location is the cytoplasm. It catalyses the reaction L-rhamnopyranose = L-rhamnulose. The protein operates within carbohydrate degradation; L-rhamnose degradation; glycerone phosphate from L-rhamnose: step 1/3. In terms of biological role, catalyzes the interconversion of L-rhamnose and L-rhamnulose. The protein is L-rhamnose isomerase of Escherichia coli O139:H28 (strain E24377A / ETEC).